We begin with the raw amino-acid sequence, 480 residues long: Proline--tRNA ligase (480 aa).

Belongs to the class-II aminoacyl-tRNA synthetase family. ProS type 3 subfamily. As to quaternary structure, homodimer.

It is found in the cytoplasm. The catalysed reaction is tRNA(Pro) + L-proline + ATP = L-prolyl-tRNA(Pro) + AMP + diphosphate. Functionally, catalyzes the attachment of proline to tRNA(Pro) in a two-step reaction: proline is first activated by ATP to form Pro-AMP and then transferred to the acceptor end of tRNA(Pro). This is Proline--tRNA ligase from Metallosphaera sedula (strain ATCC 51363 / DSM 5348 / JCM 9185 / NBRC 15509 / TH2).